An 896-amino-acid polypeptide reads, in one-letter code: UPF0182 protein GM21_2279 (896 aa).

The next 7 helical transmembrane spans lie at 6 to 26 (MTFI…LLSF), 46 to 66 (VYAQ…FLQL), 99 to 119 (LVRP…GNWG), 158 to 180 (LLKS…AYYV), 201 to 221 (LAVL…LESF), 245 to 265 (TLRI…LGIW), and 271 to 291 (LALG…RVYP).

The protein belongs to the UPF0182 family.

The protein resides in the cell membrane. This is UPF0182 protein GM21_2279 from Geobacter sp. (strain M21).